Consider the following 321-residue polypeptide: Cytochrome c biogenesis protein CcsA (321 aa).

The next 7 helical transmembrane spans lie at 9–29, 44–64, 68–88, 143–163, 226–246, 260–274, and 289–309; these read ILTHISFSTISIVITIHLITL, GMIATFFCITGFLVSRWASSG, LSNLYESLIFLSWALYILHMI, MLLSYATLLCGSLLSAALLMI, VISLGFTLLTIGILCGAVWAN, TWAFITWTIFAIYLH, and VASIGFLIIWICYFGINLLGI.

Belongs to the CcmF/CycK/Ccl1/NrfE/CcsA family. May interact with Ccs1.

Its subcellular location is the plastid. The protein localises to the chloroplast thylakoid membrane. Required during biogenesis of c-type cytochromes (cytochrome c6 and cytochrome f) at the step of heme attachment. In Oryza sativa subsp. indica (Rice), this protein is Cytochrome c biogenesis protein CcsA.